The chain runs to 111 residues: Mitochondrial import inner membrane translocase subunit TIM14 (111 aa).

Residues 1-3 lie on the Mitochondrial intermembrane side of the membrane; it reads MTG. The helical transmembrane segment at 4 to 24 threads the bilayer; the sequence is GLIAAGLGLAAVGFGARYVLR. Over 25–111 the chain is Mitochondrial matrix; the sequence is NQALIKKGME…AKDLMESTKS (87 aa). The 54-residue stretch at 58–111 folds into the J domain; sequence EAAKILGITPSAKPAKIKDAHKKVMIVNHPDRGGSPYLAAKINEAKDLMESTKS.

It belongs to the TIM14 family. Probable component of the PAM complex at least composed of a mitochondrial HSP70 protein, GrpE, tim-44, tim-16 and tim-14.

Its subcellular location is the mitochondrion inner membrane. In terms of biological role, probable component of the PAM complex, a complex required for the translocation of transit peptide-containing proteins from the inner membrane into the mitochondrial matrix in an ATP-dependent manner. May act as a co-chaperone that stimulate the ATP-dependent activity. In Caenorhabditis briggsae, this protein is Mitochondrial import inner membrane translocase subunit TIM14 (dnj-21).